Consider the following 502-residue polypeptide: ATP synthase subunit alpha (502 aa).

169 to 176 serves as a coordination point for ATP; sequence GDRQTGKT.

The protein belongs to the ATPase alpha/beta chains family. F-type ATPases have 2 components, CF(1) - the catalytic core - and CF(0) - the membrane proton channel. CF(1) has five subunits: alpha(3), beta(3), gamma(1), delta(1), epsilon(1). CF(0) has three main subunits: a(1), b(2) and c(9-12). The alpha and beta chains form an alternating ring which encloses part of the gamma chain. CF(1) is attached to CF(0) by a central stalk formed by the gamma and epsilon chains, while a peripheral stalk is formed by the delta and b chains.

Its subcellular location is the cell inner membrane. The enzyme catalyses ATP + H2O + 4 H(+)(in) = ADP + phosphate + 5 H(+)(out). Produces ATP from ADP in the presence of a proton gradient across the membrane. The alpha chain is a regulatory subunit. The sequence is that of ATP synthase subunit alpha from Trichlorobacter lovleyi (strain ATCC BAA-1151 / DSM 17278 / SZ) (Geobacter lovleyi).